A 173-amino-acid polypeptide reads, in one-letter code: Cytochrome c-type biogenesis protein CcmE (173 aa).

The Cytoplasmic segment spans residues 1 to 8; that stretch reads MMSRKKRR. A helical; Signal-anchor for type II membrane protein transmembrane segment spans residues 9–29; it reads LWIVIACGIGLSTAVALMLFA. The Periplasmic portion of the chain corresponds to 30-173; it reads FRSSLSFFMS…PAQIEASNNG (144 aa). Heme contacts are provided by H127 and Y131. The disordered stretch occupies residues 145 to 173; the sequence is KWNPKFGPPPNAGAWDDKSPAQIEASNNG.

Belongs to the CcmE/CycJ family.

It localises to the cell inner membrane. Functionally, heme chaperone required for the biogenesis of c-type cytochromes. Transiently binds heme delivered by CcmC and transfers the heme to apo-cytochromes in a process facilitated by CcmF and CcmH. This is Cytochrome c-type biogenesis protein CcmE from Acidiphilium cryptum (strain JF-5).